Here is a 252-residue protein sequence, read N- to C-terminus: Putative teichuronic acid biosynthesis glycosyltransferase TuaG (252 aa).

The protein belongs to the glycosyltransferase 2 family.

The protein operates within cell wall biogenesis; teichuronic acid biosynthesis. The polypeptide is Putative teichuronic acid biosynthesis glycosyltransferase TuaG (tuaG) (Bacillus subtilis (strain 168)).